We begin with the raw amino-acid sequence, 858 residues long: Leucine--tRNA ligase (858 aa).

The short motif at 43-54 is the 'HIGH' region element; it reads PYPSGDGLHVGH. Residues 629 to 633 carry the 'KMSKS' region motif; that stretch reads KMSKS. Position 632 (Lys632) interacts with ATP.

The protein belongs to the class-I aminoacyl-tRNA synthetase family.

The protein resides in the cytoplasm. The enzyme catalyses tRNA(Leu) + L-leucine + ATP = L-leucyl-tRNA(Leu) + AMP + diphosphate. This Treponema denticola (strain ATCC 35405 / DSM 14222 / CIP 103919 / JCM 8153 / KCTC 15104) protein is Leucine--tRNA ligase.